Reading from the N-terminus, the 487-residue chain is Serine carboxypeptidase-like 38 (487 aa).

A signal peptide spans 1-20 (MGKQQDWSVTACIFLSLSLA). Disulfide bonds link C119–C368, C280–C290, and C315–C336. Residue S215 is part of the active site. N-linked (GlcNAc...) asparagine glycosylation is present at N233. N317 and N357 each carry an N-linked (GlcNAc...) asparagine glycan. Residue D407 is part of the active site. Residues N423 and N449 are each glycosylated (N-linked (GlcNAc...) asparagine). H460 is a catalytic residue.

This sequence belongs to the peptidase S10 family. In terms of tissue distribution, expressed in seedlings, roots, leaves, flowers and siliques.

The protein localises to the secreted. Probable carboxypeptidase. The polypeptide is Serine carboxypeptidase-like 38 (SCPL38) (Arabidopsis thaliana (Mouse-ear cress)).